A 468-amino-acid polypeptide reads, in one-letter code: ATP synthase subunit beta (468 aa).

155–162 (GGAGVGKT) contacts ATP.

The protein belongs to the ATPase alpha/beta chains family. In terms of assembly, F-type ATPases have 2 components, CF(1) - the catalytic core - and CF(0) - the membrane proton channel. CF(1) has five subunits: alpha(3), beta(3), gamma(1), delta(1), epsilon(1). CF(0) has three main subunits: a(1), b(2) and c(9-12). The alpha and beta chains form an alternating ring which encloses part of the gamma chain. CF(1) is attached to CF(0) by a central stalk formed by the gamma and epsilon chains, while a peripheral stalk is formed by the delta and b chains.

Its subcellular location is the cell membrane. The enzyme catalyses ATP + H2O + 4 H(+)(in) = ADP + phosphate + 5 H(+)(out). Its function is as follows. Produces ATP from ADP in the presence of a proton gradient across the membrane. The catalytic sites are hosted primarily by the beta subunits. In Bacillus cereus (strain ATCC 10987 / NRS 248), this protein is ATP synthase subunit beta.